The chain runs to 840 residues: Subtilisin-like protease SBT2.3 (840 aa).

The N-terminal stretch at 1 to 27 (MVRVMLVRFGFLLLMISFVFLSNNTLG) is a signal peptide. A propeptide spans 28-146 (QQQDDDDDSA…IVLDYSVRTA (119 aa)) (activation peptide). Positions 38–146 (VYIVTLKQPP…IVLDYSVRTA (109 aa)) constitute an Inhibitor I9 domain. The span at 61 to 81 (KSKFTPKLRPRNNSRKRHGKS) shows a compositional bias: basic residues. Residues 61–85 (KSKFTPKLRPRNNSRKRHGKSKIPS) form a disordered region. Asn72 carries an N-linked (GlcNAc...) asparagine glycan. Residues 148–694 (TYTPQFMGLP…SGFVNATAAL (547 aa)) form the Peptidase S8 domain. The active-site Charge relay system is the Asp180. 2 N-linked (GlcNAc...) asparagine glycosylation sites follow: Asn193 and Asn241. The active-site Charge relay system is the His255. Asn398, Asn427, Asn480, Asn525, and Asn553 each carry an N-linked (GlcNAc...) asparagine glycan. The PA domain maps to 418–513 (MISAFHALNN…MDMPGIIIPS (96 aa)). Ser619 serves as the catalytic Charge relay system. 5 N-linked (GlcNAc...) asparagine glycosylation sites follow: Asn689, Asn715, Asn723, Asn767, and Asn808.

This sequence belongs to the peptidase S8 family.

Its subcellular location is the secreted. The polypeptide is Subtilisin-like protease SBT2.3 (Arabidopsis thaliana (Mouse-ear cress)).